We begin with the raw amino-acid sequence, 272 residues long: Oligodendrocyte transcription factor 3 (272 aa).

The segment covering methionine 1–serine 14 has biased composition (low complexity). The segment at methionine 1–lysine 71 is disordered. Residues aspartate 24–glutamine 33 show a composition bias toward basic residues. Positions arginine 36–aspartate 46 are enriched in polar residues. A coiled-coil region spans residues serine 68–asparagine 89. The region spanning glutamine 83 to leucine 137 is the bHLH domain.

The protein localises to the nucleus. Functionally, may determine the distinct specification program of class A neurons in the dorsal part of the spinal cord and suppress specification of class B neurons. The polypeptide is Oligodendrocyte transcription factor 3 (OLIG3) (Homo sapiens (Human)).